A 280-amino-acid chain; its full sequence is UDP-3-O-acyl-N-acetylglucosamine deacetylase (280 aa).

Positions 79, 237, and 241 each coordinate Zn(2+). The Proton donor role is filled by His-264.

It belongs to the LpxC family. It depends on Zn(2+) as a cofactor.

It catalyses the reaction a UDP-3-O-[(3R)-3-hydroxyacyl]-N-acetyl-alpha-D-glucosamine + H2O = a UDP-3-O-[(3R)-3-hydroxyacyl]-alpha-D-glucosamine + acetate. Its pathway is glycolipid biosynthesis; lipid IV(A) biosynthesis; lipid IV(A) from (3R)-3-hydroxytetradecanoyl-[acyl-carrier-protein] and UDP-N-acetyl-alpha-D-glucosamine: step 2/6. In terms of biological role, catalyzes the hydrolysis of UDP-3-O-myristoyl-N-acetylglucosamine to form UDP-3-O-myristoylglucosamine and acetate, the committed step in lipid A biosynthesis. The polypeptide is UDP-3-O-acyl-N-acetylglucosamine deacetylase (Chlamydia abortus (strain DSM 27085 / S26/3) (Chlamydophila abortus)).